The following is a 384-amino-acid chain: Omega-6 fatty acid desaturase, endoplasmic reticulum (384 aa).

The disordered stretch occupies residues 1 to 23; sequence MGAGGRMQVSPSPKKSETDTLKR. Residues 14–23 are compositionally biased toward basic and acidic residues; sequence KKSETDTLKR. The next 2 membrane-spanning stretches (helical) occupy residues 56–76 and 84–104; these read LIWDIIVASCFYYVATTYFPL and VAWPLYWACQGVVLTGVWVIA. The Histidine box-1 signature appears at 105-109; sequence HECGH. A helical transmembrane segment spans residues 117-137; it reads WLDDTVGLIFHSFLLVPYFSW. The short motif at 141-145 is the Histidine box-2 element; the sequence is HRRHH. The next 3 membrane-spanning stretches (helical) occupy residues 180 to 200, 226 to 246, and 253 to 273; these read VMLTVQFTLGWPLYWAFNVSG, IYVSDAGILAVCYGLYRYAAA, and VCLYGVPLLIVNAFLVLITYL. Positions 316 to 320 match the Histidine box-3 motif; the sequence is HVAHH.

The protein belongs to the fatty acid desaturase type 1 family.

It localises to the endoplasmic reticulum membrane. It functions in the pathway lipid metabolism; polyunsaturated fatty acid biosynthesis. ER (microsomal) omega-6 fatty acid desaturase introduces the second double bond in the biosynthesis of 18:3 fatty acids, important constituents of plant membranes. It is thought to use cytochrome b5 as an electron donor and to act on fatty acids esterified to phosphatidylcholine and, possibly, other phospholipids. The protein is Omega-6 fatty acid desaturase, endoplasmic reticulum of Brassica juncea (Indian mustard).